The following is a 510-amino-acid chain: uncharacterized protein (510 aa).

Residues 1-89 (MTSSLDDIEP…QGQRKKVLLK (89 aa)) are Lumenal-facing. The interval 38–76 (AVSQGVPDMDGQTTDSSKDPEPNSEDKKAFPPSSGSFFS) is disordered. Over residues 53 to 66 (SSKDPEPNSEDKKA) the composition is skewed to basic and acidic residues. The span at 67–76 (FPPSSGSFFS) shows a compositional bias: low complexity. A helical transmembrane segment spans residues 90-110 (FVFTNCLLAIICFTMFVLFWG). The Cytoplasmic segment spans residues 111 to 123 (ALYDTSKYLHKVK). A helical membrane pass occupies residues 124 to 144 (LLVVIQEPPVVILDNNSSMVV). At 145–312 (PSISYALPTF…TDRILLAPTQ (168 aa)) the chain is on the lumenal side. A helical transmembrane segment spans residues 313-333 (IGVVYCLLLTFFQFLLYGPLH). The Cytoplasmic segment spans residues 334-349 (VEMAKVLRPANGLIYR). Residues 350 to 370 (IAMSWFTFFFASLFFCTTTAI) form a helical membrane-spanning segment. The Lumenal segment spans residues 371 to 381 (FQVDFTKSFGR). A helical transmembrane segment spans residues 382–402 (GGFVVYWMSTWLFMLAAGGAN). At 403-416 (ENAVMLVITLGPQY) the chain is on the cytoplasmic side. A helical transmembrane segment spans residues 417–437 (LGFWILSFVILNIAPSFFPLA). Over 438–474 (LNNNVYRYGYMMPVHNVIDIYRVIFFDVTRRKMGRNY) the chain is Lumenal. Residues 475 to 495 (GILVALIALNTALLPFVGKYA) traverse the membrane as a helical segment. Over 496–510 (SRKLKQKALVAAKQS) the chain is Cytoplasmic.

To yeast SNG1.

Its subcellular location is the endoplasmic reticulum membrane. This is an uncharacterized protein from Saccharomyces cerevisiae (strain ATCC 204508 / S288c) (Baker's yeast).